The primary structure comprises 541 residues: L-ornithine N(5)-monooxygenase (541 aa).

FAD is bound by residues 50-58 and Q69; that span reads EKQPEFQWH. K74 contributes to the substrate binding site. 223 to 226 provides a ligand contact to NADP(+); it reads SGQS. Substrate contacts are provided by residues 269-272 and N300; that span reads NEIF. 300-302 lines the NADP(+) pocket; sequence NYS. Residues 430 to 474 form a disordered region; it reads TEIPKGPDGSLFDASEEEATWRPASPITPASPSPPSTPTSSALSQ. Position 520–522 (520–522) interacts with FAD; that stretch reads SLL. A substrate-binding site is contributed by S523.

This sequence belongs to the lysine N(6)-hydroxylase/L-ornithine N(5)-oxygenase family. In terms of assembly, homotetramer. Requires FAD as cofactor.

It catalyses the reaction L-ornithine + NADPH + O2 = N(5)-hydroxy-L-ornithine + NADP(+) + H2O. It carries out the reaction L-ornithine + NADH + O2 = N(5)-hydroxy-L-ornithine + NAD(+) + H2O. It participates in siderophore biosynthesis. Functionally, L-ornithine N(5)-monooxygenase; part of the siderophore basidioferrin biosynthetic pathway. The biosynthesis of basidioferrin depends on the hydroxylation of ornithine to N(5)-hydroxyornithine, catalyzed by the monooxygenase SMO1. The second step, the acylation of N(5)-hydroxy-L-ornithine is catalyzed by a not yet identified N-acyltransferase. Finally, assembly of basidioferrin is catalyzed by the nonribosomal peptide synthase (NRPS) NPS2 via amide bond formation between three L-AHO molecules to release the linear L-AHO trimer. In Ceriporiopsis subvermispora (strain B) (White-rot fungus), this protein is L-ornithine N(5)-monooxygenase (SMO1).